The primary structure comprises 511 residues: MKCLLYLAFLFIGVNCKFTIVFPHNQKGNWKNVPSNYHYCPSSSDLNWHNDLIGTAIQVKMPKSHKAIQADGWMCHASKWVTTCDFRWYGPKYITQSIRSFTPSVEQCKESIEQTKQGTWLNPGFPPQSCGYATVTDAEAVIVQVTPHHVLVDEYTGEWVDSQFINGKCSNYICPTVHNSTTWHSDYKVKGLCDSNLISMDITFFSEDGELSSLGKEGTGFRSNYFAYETGGKACKMQYCKHWGVRLPSGVWFEMADKDLFAAARFPECPEGSSISAPSQTSVDVSLIQDVERILDYSLCQETWSKIRAGLPISPVDLSYLAPKNPGTGPAFTIINGTLKYFETRYIRVDIAAPILSRMVGMISGTTTERELWDDWAPYEDVEIGPNGVLRTSSGYKFPLYMIGHGMLDSDLHLSSKAQVFEHPHIQDAASQLPDDESLFFGDTGLSKNPIELVEGWFSSWKSSIASFFFIIGLIIGLFLVLRVGIHLCIKLKHTKKRQIYTDIEMNRLGK.

An N-terminal signal peptide occupies residues 1-16; the sequence is MKCLLYLAFLFIGVNC. The Virion surface portion of the chain corresponds to 17-467; that stretch reads KFTIVFPHNQ…FSSWKSSIAS (451 aa). Residues 18–35 form a trimerization region; sequence FTIVFPHNQKGNWKNVPS. Cystine bridges form between Cys-40–Cys-300, Cys-75–Cys-108, Cys-84–Cys-130, Cys-169–Cys-174, Cys-193–Cys-240, and Cys-235–Cys-269. The segment at 53 to 172 is fusion peptide; it reads IGTAIQVKMP…QFINGKCSNY (120 aa). N-linked (GlcNAc...) asparagine; by host glycosylation occurs at Asn-179. Positions 259-309 are trimerization; that stretch reads DLFAAARFPECPEGSSISAPSQTSVDVSLIQDVERILDYSLCQETWSKIRA. The N-linked (GlcNAc...) asparagine; by host glycan is linked to Asn-336. The trimerization stretch occupies residues 383-405; that stretch reads EIGPNGVLRTSSGYKFPLYMIGH. Residues 468-488 traverse the membrane as a helical segment; it reads FFFIIGLIIGLFLVLRVGIHL. A lipid anchor (S-palmitoyl cysteine; by host) is attached at Cys-489. Over 489–511 the chain is Intravirion; that stretch reads CIKLKHTKKRQIYTDIEMNRLGK. The short motif at 496 to 506 is the basolateral targeting ex vivo element; it reads KKRQIYTDIEM.

Belongs to the vesiculovirus glycoprotein family. In terms of assembly, homotrimer. Interacts with host LDL at target cell surface. Glycosylated by host. Palmitoylated by host.

Its subcellular location is the virion membrane. The protein localises to the host membrane. In terms of biological role, attaches the virus to host LDL receptors, inducing clathrin-dependent endocytosis of the virion. In the endosome, the acidic pH induces conformational changes in the glycoprotein trimer, which trigger fusion between virus and endosomal membrane. The protein is Glycoprotein (G) of Aedes (Bovine).